We begin with the raw amino-acid sequence, 320 residues long: Malate dehydrogenase (320 aa).

Residues 10 to 15 (GSGMIG) and Asp34 each bind NAD(+). 2 residues coordinate substrate: Arg83 and Arg89. Residues Asn96 and 119-121 (ITN) contribute to the NAD(+) site. Positions 121 and 152 each coordinate substrate. The Proton acceptor role is filled by His176.

It belongs to the LDH/MDH superfamily. MDH type 3 family.

It carries out the reaction (S)-malate + NAD(+) = oxaloacetate + NADH + H(+). Its function is as follows. Catalyzes the reversible oxidation of malate to oxaloacetate. The protein is Malate dehydrogenase of Allorhizobium ampelinum (strain ATCC BAA-846 / DSM 112012 / S4) (Agrobacterium vitis (strain S4)).